Reading from the N-terminus, the 282-residue chain is Probable endonuclease 4 (282 aa).

The Zn(2+) site is built by His69, His109, Glu145, Asp179, His182, His216, Asp229, His231, and Glu261.

It belongs to the AP endonuclease 2 family. Requires Zn(2+) as cofactor.

The enzyme catalyses Endonucleolytic cleavage to 5'-phosphooligonucleotide end-products.. Endonuclease IV plays a role in DNA repair. It cleaves phosphodiester bonds at apurinic or apyrimidinic (AP) sites, generating a 3'-hydroxyl group and a 5'-terminal sugar phosphate. The protein is Probable endonuclease 4 of Edwardsiella ictaluri (strain 93-146).